The chain runs to 639 residues: Carbon monoxide dehydrogenase (639 aa).

The [4Fe-4S] cluster site is built by Cys-41, Cys-49, Cys-50, Cys-53, Cys-58, and Cys-72. Residues His-265, Cys-300, Cys-338, Cys-451, Cys-481, and Cys-531 each contribute to the [Ni-4Fe-4S] cluster site.

Belongs to the Ni-containing carbon monoxide dehydrogenase family. As to quaternary structure, homodimer. The cofactor is [4Fe-4S] cluster. Requires [Ni-4Fe-4S] cluster as cofactor.

The protein localises to the cytoplasm. The protein resides in the cell inner membrane. The enzyme catalyses CO + 2 oxidized [2Fe-2S]-[ferredoxin] + H2O = 2 reduced [2Fe-2S]-[ferredoxin] + CO2 + 2 H(+). In terms of biological role, allows growth in a CO-dependent manner in the dark. CODH oxidizes carbon monoxide coupled, via CooF, to the reduction of a hydrogen cation by a hydrogenase (possibly CooH). In Rhodospirillum rubrum, this protein is Carbon monoxide dehydrogenase (cooS).